Reading from the N-terminus, the 293-residue chain is N-acetylmannosamine kinase (293 aa).

ATP contacts are provided by residues 5–12 (AIDIGGTK) and 133–140 (GVGGGLVI). Positions 157, 167, 169, and 174 each coordinate Zn(2+).

Belongs to the ROK (NagC/XylR) family. NanK subfamily. Homodimer.

It catalyses the reaction an N-acyl-D-mannosamine + ATP = an N-acyl-D-mannosamine 6-phosphate + ADP + H(+). Its pathway is amino-sugar metabolism; N-acetylneuraminate degradation; D-fructose 6-phosphate from N-acetylneuraminate: step 2/5. In terms of biological role, catalyzes the phosphorylation of N-acetylmannosamine (ManNAc) to ManNAc-6-P. The protein is N-acetylmannosamine kinase of Vibrio vulnificus (strain CMCP6).